The sequence spans 388 residues: Cdc42 effector protein 1 (388 aa).

Positions 1–28 (MPGPQGGTGAPSMSLGKLSPVGWVPSSH) are disordered. Phosphoserine is present on residues serine 19 and serine 27. Threonine 34 carries the phosphothreonine modification. In terms of domain architecture, CRIB spans 38–52 (ISPPLGDFRHTMHVG). Position 39 is a phosphoserine (serine 39). Arginine 53 is modified (omega-N-methylarginine). Serine 65, serine 77, serine 101, serine 113, serine 121, and serine 139 each carry phosphoserine. Residues 165–206 (RLPRVEKHSSRDRDHDRDPDHSQDREQSSSPSEPNPNPELRR) form a disordered region. Residues 167–191 (PRVEKHSSRDRDHDRDPDHSQDREQ) show a composition bias toward basic and acidic residues. Serine 193, serine 207, serine 209, and serine 212 each carry phosphoserine. 2 consecutive repeat copies span residues 237–243 (PAANPPA) and 250–256 (PTAKPPA). The disordered stretch occupies residues 237–257 (PAANPPAPAANPAPTAKPPAD). The segment at 237–270 (PAANPPAPAANPAPTAKPPADAVTTLDTVTSLPA) is 2 X 7 AA tandem repeats of [PT]-[AT]-A-[ENT]-[PT]-[PTS]-[AG]. The span at 239–253 (ANPPAPAANPAPTAK) shows a compositional bias: pro residues. Serine 298, serine 318, serine 347, and serine 350 each carry phosphoserine.

Belongs to the BORG/CEP family. As to quaternary structure, interacts with RHOQ and CDC42, in a GTP-dependent manner.

The protein resides in the endomembrane system. It is found in the cytoplasm. The protein localises to the cytoskeleton. In terms of biological role, probably involved in the organization of the actin cytoskeleton. Induced membrane extensions in fibroblasts. This chain is Cdc42 effector protein 1, found in Rattus norvegicus (Rat).